A 755-amino-acid chain; its full sequence is Cartilage oligomeric matrix protein (755 aa).

Positions 1–19 are cleaved as a signal peptide; that stretch reads MSPTACVLVLALAALRATG. A COMP N-terminal region spans residues 21–84; sequence GQIPLGGDLA…PARTPGLSVR (64 aa). An EGF-like 1 domain is found at 85–124; the sequence is PVALCAPGSCFPGVVCTETATGARCGPCPPGYTGNGSHCT. 21 disulfide bridges follow: Cys-89/Cys-100, Cys-94/Cys-109, Cys-112/Cys-123, Cys-129/Cys-140, Cys-134/Cys-149, Cys-152/Cys-176, Cys-182/Cys-195, Cys-189/Cys-204, Cys-207/Cys-219, Cys-227/Cys-241, Cys-235/Cys-251, Cys-253/Cys-264, Cys-280/Cys-285, Cys-290/Cys-310, Cys-326/Cys-346, Cys-349/Cys-369, Cys-385/Cys-405, Cys-408/Cys-428, Cys-446/Cys-466, Cys-482/Cys-502, and Cys-518/Cys-739. Asn-119 carries N-linked (GlcNAc...) asparagine glycosylation. Residues 125-177 form the EGF-like 2; calcium-binding domain; it reads DVNECNAHPCFPRVRCINTSPGFHCEACPPGFSGPTHEGVGLTFAKTNKQVCT. The 43-residue stretch at 178–220 folds into the EGF-like 3; calcium-binding domain; that stretch reads DINECETGQHNCVPNSVCVNTRGSFQCGPCQPGFVGDQRSGCQ. An EGF-like 4 domain is found at 223-265; that stretch reads GQHFCPDGSPSPCHEKADCILERDGSRSCVCAVGWAGNGLLCG. TSP type-3 repeat units lie at residues 266–298, 299–334, 335–357, 358–393, 394–416, 417–454, 455–490, and 491–526; these read RDTD…NSGQ, EDVD…NPDQ, RNSD…NDDQ, KDTD…NFDQ, SDSD…NPDQ, RDVD…NSAQ, QDSD…NPGQ, and EDND…EVTL. Residues 295–501 are disordered; the sequence is NSGQEDVDRD…DNDRDGVGDA (207 aa). 2 stretches are compositionally biased toward basic and acidic residues: residues 332–344 and 350–365; these read PDQR…KWGD and RSQK…RDGQ. Ser-394 is subject to Phosphoserine. 2 stretches are compositionally biased toward basic and acidic residues: residues 412 to 424 and 456 to 465; these read DNPD…HDFV and DSDHDGKGDA. Residues 525–755 are mediates cell survival and induction of the IAP family of survival proteins; sequence TLTDFRAFQT…DYERHRLRRA (231 aa). A TSP C-terminal domain is found at 530–744; sequence RAFQTVVLDP…LRYRCNDTIP (215 aa). A glycan (N-linked (GlcNAc...) asparagine) is linked at Asn-740.

Belongs to the thrombospondin family. In terms of assembly, pentamer; disulfide-linked. Exists in a more compact conformation in the presence of calcium and shows a more extended conformation in the absence of calcium. Interacts with ITGB3, ITGA5 and FN1. Binding to FN1 requires the presence of divalent cations (Ca(2+), Mg(2+) or Mn(2+)). The greatest amount of binding is seen in the presence of Mn(2+). Interacts with MATN1, MATN3, MATN4 and ACAN. Binds heparin, heparan sulfate and chondroitin sulfate. EDTA dimishes significantly its binding to ACAN and abolishes its binding to MATN3, MATN4 and chondroitin sulfate. Interacts with collagen I, II and IX, and interaction with these collagens is dependent on the presence of zinc ions. Interacts with ADAMTS12. Interacts with ITGA7. Ca(2+) is required as a cofactor. Post-translationally, proteolytically cleaved by metalloproteases ADAMTS4 and ADAMTS1 with ADAMTS4 showing more potent activity.

The protein localises to the secreted. It is found in the extracellular space. It localises to the extracellular matrix. Plays a role in the structural integrity of cartilage via its interaction with other extracellular matrix proteins such as the collagens and fibronectin. Can mediate the interaction of chondrocytes with the cartilage extracellular matrix through interaction with cell surface integrin receptors. Could play a role in the pathogenesis of osteoarthritis. Potent suppressor of apoptosis in both primary chondrocytes and transformed cells. Suppresses apoptosis by blocking the activation of caspase-3 and by inducing the IAP family of survival proteins (BIRC3, BIRC2, BIRC5 and XIAP). Essential for maintaining a vascular smooth muscle cells (VSMCs) contractile/differentiated phenotype under physiological and pathological stimuli. Maintains this phenotype of VSMCs by interacting with ITGA7. The chain is Cartilage oligomeric matrix protein from Rattus norvegicus (Rat).